The following is a 51-amino-acid chain: Cytochrome bd ubiquinol oxidase subunit X (51 aa).

Topologically, residues 1–3 are cytoplasmic; the sequence is MWY. The helical transmembrane segment at 4–26 threads the bilayer; the sequence is FSWLLGLPLAAAFAVLNAMWYEL. The Periplasmic portion of the chain corresponds to 27-51; that stretch reads MDDRARKRLAADPTAELALEGNKHH.

The protein belongs to the cytochrome ubiquinol oxidase subunit X family. May be a subunit of cytochrome ubiquinol oxidase.

Its subcellular location is the cell inner membrane. The enzyme catalyses 2 a ubiquinol + O2(in) + 4 H(+)(in) = 2 a ubiquinone + 2 H2O(in) + 4 H(+)(out). It functions in the pathway energy metabolism; oxidative phosphorylation. Functionally, required for correct functioning of cytochrome bd oxidase. The chain is Cytochrome bd ubiquinol oxidase subunit X (cydX) from Brucella abortus (strain 2308).